A 622-amino-acid chain; its full sequence is Membrane protein insertase YidC (622 aa).

A helical transmembrane segment spans residues 8–28 (LFLALILSMGIWMGVNYFFFP). Over residues 33 to 61 (KTSETKEVKVDKPSDDKQDQIQKEKKESR) the composition is skewed to basic and acidic residues. Residues 33–70 (KTSETKEVKVDKPSDDKQDQIQKEKKESRTTIPSKGTK) are disordered. Helical transmembrane passes span 413–433 (FTIP…KLVF), 484–504 (VGGC…YTAF), 532–552 (AIPY…LMVG), and 571–591 (MLMY…PSGV).

It belongs to the OXA1/ALB3/YidC family. Type 1 subfamily. In terms of assembly, interacts with the Sec translocase complex via SecD. Specifically interacts with transmembrane segments of nascent integral membrane proteins during membrane integration.

It is found in the cell inner membrane. In terms of biological role, required for the insertion and/or proper folding and/or complex formation of integral membrane proteins into the membrane. Involved in integration of membrane proteins that insert both dependently and independently of the Sec translocase complex, as well as at least some lipoproteins. Aids folding of multispanning membrane proteins. The polypeptide is Membrane protein insertase YidC (Leptospira borgpetersenii serovar Hardjo-bovis (strain JB197)).